A 247-amino-acid chain; its full sequence is 3-deoxy-manno-octulosonate cytidylyltransferase (247 aa).

The protein belongs to the KdsB family.

The protein localises to the cytoplasm. It catalyses the reaction 3-deoxy-alpha-D-manno-oct-2-ulosonate + CTP = CMP-3-deoxy-beta-D-manno-octulosonate + diphosphate. It participates in nucleotide-sugar biosynthesis; CMP-3-deoxy-D-manno-octulosonate biosynthesis; CMP-3-deoxy-D-manno-octulosonate from 3-deoxy-D-manno-octulosonate and CTP: step 1/1. The protein operates within bacterial outer membrane biogenesis; lipopolysaccharide biosynthesis. Functionally, activates KDO (a required 8-carbon sugar) for incorporation into bacterial lipopolysaccharide in Gram-negative bacteria. In Leptospira interrogans serogroup Icterohaemorrhagiae serovar Lai (strain 56601), this protein is 3-deoxy-manno-octulosonate cytidylyltransferase.